Reading from the N-terminus, the 324-residue chain is Beta-ketoacyl-[acyl-carrier-protein] synthase III (324 aa).

Residues Cys112 and His249 contribute to the active site. An ACP-binding region spans residues 250–254 (QANRR). Residue Asn279 is part of the active site.

This sequence belongs to the thiolase-like superfamily. FabH family. As to quaternary structure, homodimer.

Its subcellular location is the cytoplasm. It carries out the reaction malonyl-[ACP] + acetyl-CoA + H(+) = 3-oxobutanoyl-[ACP] + CO2 + CoA. Its pathway is lipid metabolism; fatty acid biosynthesis. Catalyzes the condensation reaction of fatty acid synthesis by the addition to an acyl acceptor of two carbons from malonyl-ACP. Catalyzes the first condensation reaction which initiates fatty acid synthesis and may therefore play a role in governing the total rate of fatty acid production. Possesses both acetoacetyl-ACP synthase and acetyl transacylase activities. Its substrate specificity determines the biosynthesis of branched-chain and/or straight-chain of fatty acids. The sequence is that of Beta-ketoacyl-[acyl-carrier-protein] synthase III from Streptococcus equi subsp. zooepidemicus (strain MGCS10565).